The following is a 467-amino-acid chain: MSGWARALLLAAVLVVMACLVPAATASLHAEETLTSQFAEFKQKHGRVYESAAEEAFRLSVFRENLFLARLHAAANPHATFGVTPFSDLTREEFRSRYHNGAAHFAAAQERARVPVKVEVVGAPAAVDWRARGAVTAVKDQGQCGSCWAFSAIGNVECQWFLAGHPLTNLSEQMLVSCDKTDSGCSGGLMNNAFEWIVQENNGAVYTEDSYPYASGEGISPPCTTSGHTVGATITGHVELPQDEAQIAAWLAVNGPVAVAVDASSWMTYTGGVMTSCVSEQLDHGVLLVGYNDSAAVPYWIIKNSWTTQWGEEGYIRIAKGSNQCLVKEEASSAVVGGPGPTPEPTTTTTTSAPGPSPSYFVQMSCTDAACIVGCENVTLPTGQCLLTTSGVSAIVTCGAETLTEEVFLTSTHCSGPSVRSSVPLNKCNRLLRGSVEFFCGSSSSGRLADVDRQRRHQPYHSRHRRL.

The first 18 residues, 1 to 18 (MSGWARALLLAAVLVVMA), serve as a signal peptide directing secretion. Residues 19-122 (CLVPAATASL…RVPVKVEVVG (104 aa)) constitute a propeptide, activation peptide. Disulfide bonds link cysteine 144–cysteine 185, cysteine 178–cysteine 223, and cysteine 277–cysteine 325. Cysteine 147 is a catalytic residue. N-linked (GlcNAc...) asparagine glycosylation occurs at asparagine 169. Histidine 284 is a catalytic residue. Asparagine 292 carries N-linked (GlcNAc...) asparagine glycosylation. Asparagine 304 is an active-site residue. The tract at residues 333–355 (SAVVGGPGPTPEPTTTTTTSAPG) is disordered. Residues 345–354 (PTTTTTTSAP) are compositionally biased toward low complexity. Asparagine 377 carries an N-linked (GlcNAc...) asparagine glycan.

This sequence belongs to the peptidase C1 family.

The catalysed reaction is Broad endopeptidase specificity similar to that of cathepsin L.. Its activity is regulated as follows. Strongly inhibited by E-64 (L-trans-epoxysuccinylleucylamido(4-guanidino)butane), Leupeptin, and N-alpha-p-tosyl-L-lysine chloromethyl ketone. Its function is as follows. Hydrolyzes chromogenic peptides at the carboxyl Arg or Lys; requires at least one more amino acid, preferably Arg, Phe, Val or Leu, between the terminal Arg or Lys and the amino-blocking group. In terms of biological role, the cysteine protease may play an important role in the development and differentiation of the parasites at several stages of their life cycle. The protein is Cruzipain of Trypanosoma cruzi.